The sequence spans 195 residues: Rho-related protein racB (195 aa).

10–17 (GDGAVGKT) is a GTP binding site. Positions 32–40 (YVPTVFDNY) match the Effector region motif. Residues 57 to 61 (DTAGQ) and 115 to 118 (TKCD) each bind GTP. Cys192 carries the post-translational modification Cysteine methyl ester. Cys192 carries the S-geranylgeranyl cysteine lipid modification. Positions 193–195 (SIL) are cleaved as a propeptide — removed in mature form.

The protein belongs to the small GTPase superfamily. Rho family. As to quaternary structure, interacts with pakB.

Its subcellular location is the cell membrane. In Dictyostelium discoideum (Social amoeba), this protein is Rho-related protein racB (racB).